Reading from the N-terminus, the 522-residue chain is Glycogen synthase (522 aa).

The interval 1-29 is disordered; sequence MISAVLDTQGDHPQQQAGDRAAPSVPVPG. An ADP-alpha-D-glucose-binding site is contributed by K58.

The protein belongs to the glycosyltransferase 1 family. Bacterial/plant glycogen synthase subfamily.

It carries out the reaction [(1-&gt;4)-alpha-D-glucosyl](n) + ADP-alpha-D-glucose = [(1-&gt;4)-alpha-D-glucosyl](n+1) + ADP + H(+). Its pathway is glycan biosynthesis; glycogen biosynthesis. In terms of biological role, synthesizes alpha-1,4-glucan chains using ADP-glucose. This chain is Glycogen synthase, found in Pseudomonas fluorescens (strain ATCC BAA-477 / NRRL B-23932 / Pf-5).